The chain runs to 328 residues: 4-hydroxy-3-methylbut-2-enyl diphosphate reductase (328 aa).

Cys24 is a binding site for [4Fe-4S] cluster. The (2E)-4-hydroxy-3-methylbut-2-enyl diphosphate site is built by His55 and His88. His55 and His88 together coordinate dimethylallyl diphosphate. Residues His55 and His88 each contribute to the isopentenyl diphosphate site. Cys110 contributes to the [4Fe-4S] cluster binding site. His138 contacts (2E)-4-hydroxy-3-methylbut-2-enyl diphosphate. His138 serves as a coordination point for dimethylallyl diphosphate. Residue His138 coordinates isopentenyl diphosphate. Glu140 serves as the catalytic Proton donor. Residue Thr178 participates in (2E)-4-hydroxy-3-methylbut-2-enyl diphosphate binding. Cys208 contributes to the [4Fe-4S] cluster binding site. Residues Ser236, Ser237, Asn238, and Ser279 each contribute to the (2E)-4-hydroxy-3-methylbut-2-enyl diphosphate site. Residues Ser236, Ser237, Asn238, and Ser279 each coordinate dimethylallyl diphosphate. The isopentenyl diphosphate site is built by Ser236, Ser237, Asn238, and Ser279.

It belongs to the IspH family. Requires [4Fe-4S] cluster as cofactor.

The catalysed reaction is isopentenyl diphosphate + 2 oxidized [2Fe-2S]-[ferredoxin] + H2O = (2E)-4-hydroxy-3-methylbut-2-enyl diphosphate + 2 reduced [2Fe-2S]-[ferredoxin] + 2 H(+). It carries out the reaction dimethylallyl diphosphate + 2 oxidized [2Fe-2S]-[ferredoxin] + H2O = (2E)-4-hydroxy-3-methylbut-2-enyl diphosphate + 2 reduced [2Fe-2S]-[ferredoxin] + 2 H(+). It functions in the pathway isoprenoid biosynthesis; dimethylallyl diphosphate biosynthesis; dimethylallyl diphosphate from (2E)-4-hydroxy-3-methylbutenyl diphosphate: step 1/1. It participates in isoprenoid biosynthesis; isopentenyl diphosphate biosynthesis via DXP pathway; isopentenyl diphosphate from 1-deoxy-D-xylulose 5-phosphate: step 6/6. Catalyzes the conversion of 1-hydroxy-2-methyl-2-(E)-butenyl 4-diphosphate (HMBPP) into a mixture of isopentenyl diphosphate (IPP) and dimethylallyl diphosphate (DMAPP). Acts in the terminal step of the DOXP/MEP pathway for isoprenoid precursor biosynthesis. The chain is 4-hydroxy-3-methylbut-2-enyl diphosphate reductase from Ehrlichia ruminantium (strain Welgevonden).